The following is a 248-amino-acid chain: Homeobox protein BarH-like 1 (248 aa).

The segment at residues 135–194 (GRRSRTVFTELQLMGLEKRFEKQKYLSTPDRIDLAESLGLSQLQVKTWYQNRRMKWKKIV) is a DNA-binding region (homeobox). The segment at 197–248 (GGGLESPTKPKGRPKKNSIPTSEQLSEQERTREADRLSDGGASSLSDANQEE) is disordered. Residues 223 to 234 (EQERTREADRLS) show a composition bias toward basic and acidic residues. Residues 237 to 248 (GASSLSDANQEE) show a composition bias toward polar residues.

This sequence belongs to the BAR homeobox family.

It localises to the nucleus. In terms of biological role, transcription factor, is involved in craniofacial development, and in stomach organogenesis. This chain is Homeobox protein BarH-like 1 (barx1), found in Danio rerio (Zebrafish).